The sequence spans 289 residues: BTB/POZ domain-containing protein KCTD7 (289 aa).

The disordered stretch occupies residues 1 to 42 (MVVVTGREPDSRHSDGAMSSSEAEDDFLEPATPTATQAGHGL). The region spanning 53–141 (VPLNIGGAHF…YAIGPLLEQL (89 aa)) is the BTB domain.

As to quaternary structure, interacts with CUL3. In terms of tissue distribution, high expression in brain, particularly in post-mitotic neurons. Expressed in the mitral cells of the olfactory bulbs, the hippocampus, the deep layers of the cerebral cortex and Purkinje cells of the cerebellum. Not detected in astrocytes or microglial cells. Also expressed in heart, liver, spleen and kidney.

Its subcellular location is the cell membrane. It localises to the cytoplasm. The protein localises to the cytosol. In terms of biological role, may be involved in the control of excitability of cortical neurons. This is BTB/POZ domain-containing protein KCTD7 (Kctd7) from Mus musculus (Mouse).